Here is a 263-residue protein sequence, read N- to C-terminus: Small ribosomal subunit protein eS4 (263 aa).

An S4 RNA-binding domain is found at 42-104; that stretch reads LPLIIFLRNR…TGEHFRLVYD (63 aa).

It belongs to the eukaryotic ribosomal protein eS4 family. As to quaternary structure, component of the small ribosomal subunit.

It localises to the cytoplasm. Component of the small ribosomal subunit. The ribosome is a large ribonucleoprotein complex responsible for the synthesis of proteins in the cell. The polypeptide is Small ribosomal subunit protein eS4 (rps4) (Xenopus laevis (African clawed frog)).